Here is a 244-residue protein sequence, read N- to C-terminus: MSTEKILTPESQLKKTKAQQKTAEQIAAERAARKAANKEKRAIILERNAAYQKEYETAERNIIQAKRDAKAAGSYYVEAQHKLVFVVRIKGINKIPPKPRKVLQLLRLTRINSGTFVKVTKATLELLKLIEPYVAYGYPSYSTIRQLVYKRGFGKINKQRVPLSDNAIIEANLGKYGILSIDDLIHEIITVGPHFKQANNFLWPFKLSNPSGGWGVPRKFKHFIQGGSFGNREEFINKLVKAMN.

Polar residues predominate over residues 1–11 (MSTEKILTPES). The interval 1-21 (MSTEKILTPESQLKKTKAQQK) is disordered.

Belongs to the universal ribosomal protein uL30 family. As to quaternary structure, component of the large ribosomal subunit (LSU). Mature yeast ribosomes consist of a small (40S) and a large (60S) subunit. The 40S small subunit contains 1 molecule of ribosomal RNA (18S rRNA) and 33 different proteins (encoded by 57 genes). The large 60S subunit contains 3 rRNA molecules (25S, 5.8S and 5S rRNA) and 46 different proteins (encoded by 81 genes).

It is found in the cytoplasm. Component of the ribosome, a large ribonucleoprotein complex responsible for the synthesis of proteins in the cell. The small ribosomal subunit (SSU) binds messenger RNAs (mRNAs) and translates the encoded message by selecting cognate aminoacyl-transfer RNA (tRNA) molecules. The large subunit (LSU) contains the ribosomal catalytic site termed the peptidyl transferase center (PTC), which catalyzes the formation of peptide bonds, thereby polymerizing the amino acids delivered by tRNAs into a polypeptide chain. The nascent polypeptides leave the ribosome through a tunnel in the LSU and interact with protein factors that function in enzymatic processing, targeting, and the membrane insertion of nascent chains at the exit of the ribosomal tunnel. The polypeptide is Large ribosomal subunit protein uL30B (Saccharomyces cerevisiae (strain ATCC 204508 / S288c) (Baker's yeast)).